The chain runs to 154 residues: 3-hydroxyacyl-[acyl-carrier-protein] dehydratase FabZ (154 aa).

H57 is an active-site residue.

This sequence belongs to the thioester dehydratase family. FabZ subfamily.

The protein localises to the cytoplasm. The enzyme catalyses a (3R)-hydroxyacyl-[ACP] = a (2E)-enoyl-[ACP] + H2O. In terms of biological role, involved in unsaturated fatty acids biosynthesis. Catalyzes the dehydration of short chain beta-hydroxyacyl-ACPs and long chain saturated and unsaturated beta-hydroxyacyl-ACPs. The protein is 3-hydroxyacyl-[acyl-carrier-protein] dehydratase FabZ of Sinorhizobium fredii (strain NBRC 101917 / NGR234).